The following is a 153-amino-acid chain: Hsp90 co-chaperone HCH1 (153 aa).

The protein belongs to the AHA1 family. Monomer. Interacts with HSP82.

The protein resides in the cytoplasm. It is found in the nucleus. In terms of biological role, co-chaperone that binds to the molecular chaperone HSP82 and stimulates its ATPase activity. Although not essential, it confers thermotolerance when intracellular levels of HSP82 are limiting. The chain is Hsp90 co-chaperone HCH1 (HCH1) from Saccharomyces cerevisiae (strain ATCC 204508 / S288c) (Baker's yeast).